We begin with the raw amino-acid sequence, 210 residues long: Holliday junction resolvase RecU (210 aa).

The tract at residues 1–34 (MAFHYPNGQPYSNHETKQPKKQGRHTSPTTLYGK) is disordered. Positions 90, 92, 105, and 124 each coordinate Mg(2+).

The protein belongs to the RecU family. Requires Mg(2+) as cofactor.

Its subcellular location is the cytoplasm. It carries out the reaction Endonucleolytic cleavage at a junction such as a reciprocal single-stranded crossover between two homologous DNA duplexes (Holliday junction).. Functionally, endonuclease that resolves Holliday junction intermediates in genetic recombination. Cleaves mobile four-strand junctions by introducing symmetrical nicks in paired strands. Promotes annealing of linear ssDNA with homologous dsDNA. Required for DNA repair, homologous recombination and chromosome segregation. This chain is Holliday junction resolvase RecU, found in Latilactobacillus sakei subsp. sakei (strain 23K) (Lactobacillus sakei subsp. sakei).